The chain runs to 572 residues: Cytochrome P450 monooxygenase xilC (572 aa).

Cysteine 515 serves as a coordination point for heme.

It belongs to the cytochrome P450 family. The cofactor is heme.

Its pathway is secondary metabolite biosynthesis. Its function is as follows. Cytochrome P450 monooxygenase; part of the gene cluster that mediates the biosynthesis of the 6-methyl-2-pyrone derivative xylariolide D. XilC hydroxylates the 5-alkyl-6-methyl-2-pyrone backbone called prexylariolide D, produced by the highly reducing polyketide synthase xilA, on its side chain to form xylariolide D. This Penicillium crustosum (Blue mold fungus) protein is Cytochrome P450 monooxygenase xilC.